Here is a 483-residue protein sequence, read N- to C-terminus: Ribulose bisphosphate carboxylase large chain (483 aa).

Positions 1 to 2 (MS) are excised as a propeptide. Substrate-binding residues include N123 and T173. K175 serves as the catalytic Proton acceptor. K177 is a binding site for substrate. Mg(2+)-binding residues include K201, D203, and E204. An N6-carboxylysine modification is found at K201. S208 is subject to Phosphoserine. H294 acts as the Proton acceptor in catalysis. Substrate-binding residues include R295 and H327. At T330 the chain carries Phosphothreonine. Substrate is bound at residue S379.

This sequence belongs to the RuBisCO large chain family. Type I subfamily. Heterohexadecamer of 8 large chains and 8 small chains; disulfide-linked. The disulfide link is formed within the large subunit homodimers. It depends on Mg(2+) as a cofactor. In terms of processing, the disulfide bond which can form in the large chain dimeric partners within the hexadecamer appears to be associated with oxidative stress and protein turnover.

It localises to the plastid. The protein resides in the chloroplast. It carries out the reaction 2 (2R)-3-phosphoglycerate + 2 H(+) = D-ribulose 1,5-bisphosphate + CO2 + H2O. It catalyses the reaction D-ribulose 1,5-bisphosphate + O2 = 2-phosphoglycolate + (2R)-3-phosphoglycerate + 2 H(+). RuBisCO catalyzes two reactions: the carboxylation of D-ribulose 1,5-bisphosphate, the primary event in carbon dioxide fixation, as well as the oxidative fragmentation of the pentose substrate in the photorespiration process. Both reactions occur simultaneously and in competition at the same active site. The polypeptide is Ribulose bisphosphate carboxylase large chain (Aethionema cordifolium (Lebanon stonecress)).